The sequence spans 211 residues: Endonuclease Htp3 (211 aa).

Positions 1–20 (MLEVPVWIPILAFAVGLGLG) are cleaved as a signal peptide. The short motif at 48-51 (RTLR) is the RxLR element. The TNase-like domain maps to 48–198 (RTLRGKVVSV…REKRVNIWSL (151 aa)). Aspartate 77 provides a ligand contact to Ca(2+). The active site involves arginine 90. Aspartate 95 contacts Ca(2+). Catalysis depends on residues glutamate 98 and arginine 138. Residue asparagine 153 is glycosylated (N-linked (GlcNAc...) asparagine). The interval 200–211 (KRETPAQYKARK) is binding to the host cell surface.

The protein in the N-terminal section; belongs to the RxLR effector family. This sequence in the C-terminal section; belongs to the LCL3 family. As to quaternary structure, interacts with the host cell surface endoplasmin gp96, in order to get translocated into to host cell. Interacts with the effector Htp1, in order to get released from vesicles into the host cytosol.

It localises to the secreted. Its subcellular location is the host cytoplasm. The protein resides in the host cytosol. Its activity is regulated as follows. The nuclease activity shows a general salt dependency with a clear reduction by magnesium and sulfate ions. Effector involved in the disease saprolegniosis in salmonids and other freshwater fish, resulting in considerable economic losses in aquaculture. Within the host fish cells, Htp3 is released from vesicles into host cytosol where it degrades nucleic acids. This chain is Endonuclease Htp3 (HTP3), found in Saprolegnia parasitica (strain CBS 223.65).